The chain runs to 1161 residues: Lethal(2) giant larvae protein (1161 aa).

Positions 15-86 are phospho-regulated basic and hydrophobic (PRBH) motif; the sequence is DRHRLQKDLF…NNSASELNVQ (72 aa). 8 WD repeats span residues 39–72, 82–128, 131–167, 189–223, 231–263, 278–320, 328–358, and 380–464; these read SALA…LYGQ, ELNV…DGKL, VSSL…EPVI, SIRQ…QRAY, SVGL…PEPP, SINR…GHKV, VIDF…AYDL, and TCNY…YNFK. Phosphoserine is present on residues Ser-473 and Ser-484. WD repeat units lie at residues 513 to 594 and 603 to 664; these read KKIA…SGVL and TCMA…LRES. Ser-679 is subject to Phosphoserine. WD repeat units lie at residues 708-778, 787-832, 837-927, and 941-964; these read VRCL…KEIQ, GISI…LKPI, LTAN…LNAA, and CFTN…ALAT. Phosphoserine is present on residues Ser-808, Ser-869, Ser-876, Ser-887, Ser-889, and Ser-893. At Ser-1013 the chain carries Phosphoserine. The disordered stretch occupies residues 1141-1161; it reads EKTNGDNKIGTPKTAPEESQF.

The protein belongs to the WD repeat L(2)GL family. May form multimeric complexes. Interacts with mahj. Interacts with aPKC; leading to phosphorylation. Interacts with ball. Phosphorylated by aPKC which lowers lipid affinity and promotes dissociation from the cell cortex. In developing oocytes, aPKC-mediated phosphorylation restricts activity to the oocyte posterior and is required for oocyte polarity formation. As to expression, expressed in the epithelial cells of the digestive tract and in gonads.

The protein resides in the cytoplasm. It localises to the cell cortex. Essential for the development of polarized epithelia, for cell polarity associated with asymmetric cell division of neuroblasts during development, and for oocyte polarity formation. Promotes the formation of actin-rich projections at the oocyte cortex and the posterior enrichment of par-1 which is required for oocyte polarization. Regulates the localization of axis-specifying morphogens such as stau and grk. Its function is as follows. Has an essential role in control of cell proliferation and differentiation during development and could act as a tumor suppressor. In terms of biological role, has an accessory function in control of cell proliferation and differentiation during development. The sequence is that of Lethal(2) giant larvae protein (l(2)gl) from Drosophila melanogaster (Fruit fly).